Here is a 29-residue protein sequence, read N- to C-terminus: Potassium-transporting ATPase KdpF subunit (29 aa).

Residues 2-22 (LIGEAVLAVVTVAVVAYLTYV) form a helical membrane-spanning segment.

Belongs to the KdpF family. The system is composed of three essential subunits: KdpA, KdpB and KdpC. The complex also contains KdpF, a small non-essential subunit.

The protein localises to the cell membrane. In terms of biological role, part of the high-affinity ATP-driven potassium transport (or Kdp) system, which catalyzes the hydrolysis of ATP coupled with the electrogenic transport of potassium into the cytoplasm. This subunit may be involved in stabilization of the complex. The Kdp system is essential for growth under K(+) limitation, and for survival under desiccation and salt crystal inclusion. The sequence is that of Potassium-transporting ATPase KdpF subunit from Halobacterium salinarum (strain ATCC 29341 / DSM 671 / R1).